A 199-amino-acid polypeptide reads, in one-letter code: Large ribosomal subunit protein uL5 (199 aa).

This sequence belongs to the universal ribosomal protein uL5 family. In terms of assembly, part of the 50S ribosomal subunit; part of the 5S rRNA/L5/L18/L25 subcomplex. Contacts the 5S rRNA and the P site tRNA. Forms a bridge to the 30S subunit in the 70S ribosome.

Its function is as follows. This is one of the proteins that bind and probably mediate the attachment of the 5S RNA into the large ribosomal subunit, where it forms part of the central protuberance. In the 70S ribosome it contacts protein S13 of the 30S subunit (bridge B1b), connecting the 2 subunits; this bridge is implicated in subunit movement. Contacts the P site tRNA; the 5S rRNA and some of its associated proteins might help stabilize positioning of ribosome-bound tRNAs. The polypeptide is Large ribosomal subunit protein uL5 (Frankia casuarinae (strain DSM 45818 / CECT 9043 / HFP020203 / CcI3)).